Reading from the N-terminus, the 273-residue chain is 4-hydroxy-tetrahydrodipicolinate reductase (273 aa).

NAD(+) is bound by residues 12–17 (GAGGRM) and Glu-38. Residue Arg-39 coordinates NADP(+). Residues 102–104 (GTT) and 126–129 (AANF) each bind NAD(+). Catalysis depends on His-159, which acts as the Proton donor/acceptor. His-160 lines the (S)-2,3,4,5-tetrahydrodipicolinate pocket. Lys-163 serves as the catalytic Proton donor. 169-170 (GT) contacts (S)-2,3,4,5-tetrahydrodipicolinate.

It belongs to the DapB family. Homotetramer.

The protein localises to the cytoplasm. It catalyses the reaction (S)-2,3,4,5-tetrahydrodipicolinate + NAD(+) + H2O = (2S,4S)-4-hydroxy-2,3,4,5-tetrahydrodipicolinate + NADH + H(+). The enzyme catalyses (S)-2,3,4,5-tetrahydrodipicolinate + NADP(+) + H2O = (2S,4S)-4-hydroxy-2,3,4,5-tetrahydrodipicolinate + NADPH + H(+). Its pathway is amino-acid biosynthesis; L-lysine biosynthesis via DAP pathway; (S)-tetrahydrodipicolinate from L-aspartate: step 4/4. In terms of biological role, catalyzes the conversion of 4-hydroxy-tetrahydrodipicolinate (HTPA) to tetrahydrodipicolinate. The polypeptide is 4-hydroxy-tetrahydrodipicolinate reductase (Shigella sonnei (strain Ss046)).